Here is a 1055-residue protein sequence, read N- to C-terminus: MKAMEERTVGLISASSSRASLKTQLENGYPRICDYCEPTIEFLSSSELARHIRQDHTTQEGGSFLCRYGEHGVCQKLPLEGVCDVDFEAHIRRCHTSQSVPYSRSTSCFTEDNEEAASLRSIRLTSDRDTPTIEKKKFTLHSFTQNLSAVLADPSRSRNDLSTFFTRHWGDTFVPTQPVPTSKRLAKMADASFDSYCQAAGESYKRYQAVKRALRLSHTEGTESGNERQDAEDLPTVFIDPRFTLGDSSTFSAVFTVPANENLDALKQTLSGKNVIPATPLEVAINKKPGEFRDYEALQNRLEMMHDVVDGRLAGKLVAKTDDFWQVVRSYSGLQEQLANALQCVMVVRKNLKHVDELVCDQTKKIIEVHQKYEQKKHLLAKLNDIACLREAQSTVQMMLSQGDYPKAIECIETSLDVLSKELNGVTCFRHLSSQLRELYSVIGRMMNEDFTSLIQKEFGVKPEAGTLIQAEGELSAVLLGLMRMRKYTFISVLREEIIEGVKSVMRHVIKSQILNSGVDLSDFDPSLTQLGEPVRRMKHADFLKTVRAVMDEEYFFCKRLEALQDILLETAQRAHPSNRHGSEDIIIERLEEAKLNESDSDDETGSFSKSTSSGGFVSGSAVNSNATATTLLSIEVRSEAFLKRVLPLIAEFGHQCAQQRISRLLIARAKNASVTEATTPTQLSECIAIVKEYQSQCEEEGWYSTQNQKAGGLGRAINKLSMDYIEKFHAARKMRIGNMLDTELWKATDVSIIDQNMVDQAIETGMLRSSKRIDDGPTKKPFKRTGSSATIDSGTSVSNQTGIIVDEESFVVVGSSITMIQILADYCEAISKMPTFAQDWNSRVIELLKTFNSRCCQLILGAGALQLVGLKTISVRNLGTIFVNLTLAGRSLELVCRFIPMVHDEMDRVLPDDRKSLLRYFKGVESEYRDHVNEIAIKLISVIAHYTTNCLGMWDVKGNIPSPEFQQICRHMLKFHNGLTGIMPRDQIESLFRQVHENFKANLREHVTGMGIRPHDTLKYGYVTQDYMYYQQNVKNMESCRNLELESLNDIMFD.

Positions 363-383 (TKKIIEVHQKYEQKKHLLAKL) form a coiled coil. The segment at 774–794 (IDDGPTKKPFKRTGSSATIDS) is disordered.

Belongs to the VPS54 family. In terms of assembly, component of the Golgi-associated retrograde protein (GARP) complex, also called VFT (VPS fifty-three) complex, composed of VPS51, VPS52, VPS53 and VPS54.

The protein localises to the golgi apparatus. It is found in the trans-Golgi network. Its function is as follows. Acts as a component of the GARP complex that is involved in retrograde transport from early and late endosomes to the trans-Golgi network (TGN). The GARP complex facilitates tethering as well as SNARE complex assembly at the Golgi. In Caenorhabditis briggsae, this protein is Vacuolar protein sorting-associated protein 54 (vps-54).